The following is a 160-amino-acid chain: Putative 4-hydroxy-4-methyl-2-oxoglutarate aldolase (160 aa).

Substrate is bound by residues 76-79 and Arg-98; that span reads GGNL. Asp-99 contacts a divalent metal cation.

The protein belongs to the class II aldolase/RraA-like family. As to quaternary structure, homotrimer. The cofactor is a divalent metal cation.

The enzyme catalyses 4-hydroxy-4-methyl-2-oxoglutarate = 2 pyruvate. The catalysed reaction is oxaloacetate + H(+) = pyruvate + CO2. In terms of biological role, catalyzes the aldol cleavage of 4-hydroxy-4-methyl-2-oxoglutarate (HMG) into 2 molecules of pyruvate. Also contains a secondary oxaloacetate (OAA) decarboxylase activity due to the common pyruvate enolate transition state formed following C-C bond cleavage in the retro-aldol and decarboxylation reactions. This is Putative 4-hydroxy-4-methyl-2-oxoglutarate aldolase from Deinococcus radiodurans (strain ATCC 13939 / DSM 20539 / JCM 16871 / CCUG 27074 / LMG 4051 / NBRC 15346 / NCIMB 9279 / VKM B-1422 / R1).